The following is a 259-amino-acid chain: Thiazole synthase (259 aa).

Lys95 (schiff-base intermediate with DXP) is an active-site residue. 1-deoxy-D-xylulose 5-phosphate contacts are provided by residues Gly156, 183–184 (AG), and 205–206 (NS).

This sequence belongs to the ThiG family. In terms of assembly, homotetramer. Forms heterodimers with either ThiH or ThiS.

Its subcellular location is the cytoplasm. The enzyme catalyses [ThiS sulfur-carrier protein]-C-terminal-Gly-aminoethanethioate + 2-iminoacetate + 1-deoxy-D-xylulose 5-phosphate = [ThiS sulfur-carrier protein]-C-terminal Gly-Gly + 2-[(2R,5Z)-2-carboxy-4-methylthiazol-5(2H)-ylidene]ethyl phosphate + 2 H2O + H(+). The protein operates within cofactor biosynthesis; thiamine diphosphate biosynthesis. In terms of biological role, catalyzes the rearrangement of 1-deoxy-D-xylulose 5-phosphate (DXP) to produce the thiazole phosphate moiety of thiamine. Sulfur is provided by the thiocarboxylate moiety of the carrier protein ThiS. In vitro, sulfur can be provided by H(2)S. The chain is Thiazole synthase from Coxiella burnetii (strain CbuK_Q154) (Coxiella burnetii (strain Q154)).